An 851-amino-acid chain; its full sequence is Protein NUD1 (851 aa).

Disordered regions lie at residues 1–31 (MDMD…NAHS) and 216–352 (LVGS…KAPS). Over residues 8 to 21 (AELSSQLENLTINS) the composition is skewed to polar residues. Low complexity-rich tracts occupy residues 223–246 (NSNN…INNK) and 260–278 (SNSF…QTQS). A compositionally biased stretch (polar residues) spans 291–304 (NTISPGQLGYQFNH). Over residues 320-333 (SSSHSLDNTSSNQS) the composition is skewed to low complexity. A Glycyl lysine isopeptide (Lys-Gly) (interchain with G-Cter in ubiquitin) cross-link involves residue Lys357. Thr388 and Thr392 each carry phosphothreonine. Phosphoserine is present on residues Ser417 and Ser419. 5 LRR repeats span residues 544-566 (DLEC…SLCH), 567-588 (HLQE…GSSR), 589-609 (MKKL…EQLI), 621-642 (TVEV…NCLP), and 643-664 (RLKV…SKME).

In terms of assembly, interacts directly with MPC54, CNM67, SPO21/MPC70, ADY3 and ADY4. Probable component of a spindle pole boby (SPB) complex composed of ADY3, SSP1, DON1, MPC54, SPO21/MPC70, NUD1 and CNM67. In terms of processing, phosphorylated from S/G2 phase until the end of mitosis.

Its subcellular location is the cytoplasm. It localises to the cytoskeleton. The protein resides in the microtubule organizing center. The protein localises to the spindle pole body. It is found in the nucleus envelope. Its function is as follows. Involved in astral microtubule organization by binding SCP72 to the outer plaque in a cell-cycle dependent manner. Required for the mitotic exit by facilitating the binding of TEMP1 to CDC15. Also involved in the pathway that organizes the shaping and sizing of the prospore membrane (PSM) during sporulation. The polypeptide is Protein NUD1 (NUD1) (Saccharomyces cerevisiae (strain ATCC 204508 / S288c) (Baker's yeast)).